The chain runs to 382 residues: 8-amino-7-oxononanoate synthase (382 aa).

R26 provides a ligand contact to substrate. Position 104–105 (104–105) interacts with pyridoxal 5'-phosphate; it reads GY. Position 129 (H129) interacts with substrate. Pyridoxal 5'-phosphate contacts are provided by residues S175, 200-203, and 232-235; these read DEAH and TLSK. K235 is modified (N6-(pyridoxal phosphate)lysine). Substrate is bound at residue T345.

The protein belongs to the class-II pyridoxal-phosphate-dependent aminotransferase family. BioF subfamily. In terms of assembly, homodimer. Requires pyridoxal 5'-phosphate as cofactor.

The catalysed reaction is 6-carboxyhexanoyl-[ACP] + L-alanine + H(+) = (8S)-8-amino-7-oxononanoate + holo-[ACP] + CO2. It functions in the pathway cofactor biosynthesis; biotin biosynthesis. Functionally, catalyzes the decarboxylative condensation of pimeloyl-[acyl-carrier protein] and L-alanine to produce 8-amino-7-oxononanoate (AON), [acyl-carrier protein], and carbon dioxide. This chain is 8-amino-7-oxononanoate synthase, found in Mycobacterium sp. (strain JLS).